A 307-amino-acid chain; its full sequence is Olfactory receptor 5M3 (307 aa).

The Extracellular segment spans residues methionine 1–valine 23. A glycan (N-linked (GlcNAc...) asparagine) is linked at asparagine 3. A helical membrane pass occupies residues leucine 24–methionine 44. The Cytoplasmic portion of the chain corresponds to valine 45 to glutamine 52. Residues leucine 53–serine 73 form a helical membrane-spanning segment. Residues asparagine 74–valine 97 are Extracellular-facing. A disulfide bridge connects residues cysteine 95 and cysteine 187. Residues glutamine 98–phenylalanine 118 traverse the membrane as a helical segment. The Cytoplasmic portion of the chain corresponds to aspartate 119–valine 137. Residues valine 138–threonine 158 form a helical membrane-spanning segment. Residues leucine 159–glutamate 194 are Extracellular-facing. Residues tyrosine 195–serine 215 form a helical membrane-spanning segment. Over tyrosine 216 to alanine 235 the chain is Cytoplasmic. Residues phenylalanine 236–methionine 256 traverse the membrane as a helical segment. Residues tyrosine 257 to glycine 269 are Extracellular-facing. A helical transmembrane segment spans residues lysine 270–leucine 290. The Cytoplasmic portion of the chain corresponds to arginine 291–cysteine 307.

This sequence belongs to the G-protein coupled receptor 1 family.

The protein localises to the cell membrane. In terms of biological role, odorant receptor. The protein is Olfactory receptor 5M3 (OR5M3) of Homo sapiens (Human).